Here is a 283-residue protein sequence, read N- to C-terminus: Probable endonuclease 4 (283 aa).

9 residues coordinate Zn(2+): His69, His109, Glu145, Asp179, His182, His216, Asp229, His231, and Glu261.

It belongs to the AP endonuclease 2 family. Zn(2+) is required as a cofactor.

The enzyme catalyses Endonucleolytic cleavage to 5'-phosphooligonucleotide end-products.. Functionally, endonuclease IV plays a role in DNA repair. It cleaves phosphodiester bonds at apurinic or apyrimidinic (AP) sites, generating a 3'-hydroxyl group and a 5'-terminal sugar phosphate. The sequence is that of Probable endonuclease 4 from Campylobacter curvus (strain 525.92).